The chain runs to 62 residues: Sperm protamine P1 (62 aa).

The tract at residues 1–62 (MARYRHSRSR…RYSRRRRRRY (62 aa)) is disordered.

Belongs to the protamine P1 family. As to expression, testis.

The protein resides in the nucleus. Its subcellular location is the chromosome. Protamines substitute for histones in the chromatin of sperm during the haploid phase of spermatogenesis. They compact sperm DNA into a highly condensed, stable and inactive complex. This is Sperm protamine P1 (PRM1) from Dendrolagus dorianus (Doria's tree-kangaroo).